Here is a 360-residue protein sequence, read N- to C-terminus: Phospho-N-acetylmuramoyl-pentapeptide-transferase (360 aa).

Topologically, residues 1–25 (MLVWLAEHLVKYYSGFNVFSYLTFR) are periplasmic. The chain crosses the membrane as a helical span at residues 26 to 46 (AIVSLLTALFISLWMGPRMIA). Over 47-71 (RLQKLSFGQVVRNDGPESHFSKRGT) the chain is Cytoplasmic. The helical transmembrane segment at 72 to 92 (PTMGGIMILTAIVISVLLWAY) threads the bilayer. Residue P93 is a topological domain, periplasmic. A helical transmembrane segment spans residues 94 to 114 (SNPYVWCVLVVLIGYGIIGFV). Topologically, residues 115 to 131 (DDYRKVVRKDTKGLIAR) are cytoplasmic. Residues 132-152 (WKYFWMSVIALGVAFALYLVG) form a helical membrane-spanning segment. Topologically, residues 153–167 (KDTPATQLVVPFFKD) are periplasmic. The helical transmembrane segment at 168–188 (VMPQLGLFYILLSYFVIVGTG) threads the bilayer. Residues 189–198 (NAVNLTDGLD) are Cytoplasmic-facing. The helical transmembrane segment at 199–219 (GLAIMPTVFVAAGFALVAWAT) threads the bilayer. At 220–235 (GNMNFANYLHIPYLRH) the chain is on the periplasmic side. The helical transmembrane segment at 236-256 (AGELVIVCTAIVGAGLGFLWF) threads the bilayer. At 257 to 262 (NTYPAQ) the chain is on the cytoplasmic side. The chain crosses the membrane as a helical span at residues 263-283 (VFMGDVGSLALGGALGIIAVL). Residues 284-287 (LRQE) lie on the Periplasmic side of the membrane. The chain crosses the membrane as a helical span at residues 288–308 (FLLVIMGGVFVVETLSVILQV). Over 309-337 (GSFKLRGQRIFRMAPIHHHYELKGWPEPR) the chain is Cytoplasmic. A helical membrane pass occupies residues 338–358 (VIVRFWIISLMLVLIGLATLK). Over 359–360 (VR) the chain is Periplasmic.

This sequence belongs to the glycosyltransferase 4 family. MraY subfamily. Mg(2+) serves as cofactor.

It is found in the cell inner membrane. It catalyses the reaction UDP-N-acetyl-alpha-D-muramoyl-L-alanyl-gamma-D-glutamyl-meso-2,6-diaminopimeloyl-D-alanyl-D-alanine + di-trans,octa-cis-undecaprenyl phosphate = di-trans,octa-cis-undecaprenyl diphospho-N-acetyl-alpha-D-muramoyl-L-alanyl-D-glutamyl-meso-2,6-diaminopimeloyl-D-alanyl-D-alanine + UMP. It functions in the pathway cell wall biogenesis; peptidoglycan biosynthesis. Functionally, catalyzes the initial step of the lipid cycle reactions in the biosynthesis of the cell wall peptidoglycan: transfers peptidoglycan precursor phospho-MurNAc-pentapeptide from UDP-MurNAc-pentapeptide onto the lipid carrier undecaprenyl phosphate, yielding undecaprenyl-pyrophosphoryl-MurNAc-pentapeptide, known as lipid I. This chain is Phospho-N-acetylmuramoyl-pentapeptide-transferase, found in Salmonella agona (strain SL483).